The chain runs to 844 residues: MVSLTIDGKDITVAKETTILDAAALLGITIPTLCWLKKVSPTGACRVCAVEIEGVDRPMTACNTPVKDGIKVTTQSEKLSRIRQKIMELMLVNHPLDCPVCDAGGECDLQNACYGLGAAKQEYGAVLERRKIRYDWPLIESDPNRCILCEKCVKVDHEIVGCNAIRVVNRGEATIIDTVDGNPLNCEFCGNCVAACPTGTLISKPFKFRGRPWAFTTTPSVCPFCATGCQIEYHSRNGRVERVTSDDSTYNSGNLCINGRFGYSYINSPDRLAEPMVKGQKADWNTAMGTAATALKQIVASHGADAVAGFGSPRVTNEDNYLFQKLMRSAIGTGNIDSEARLGFAATQKVLREMLGIAGASTTIDAIDRATAVLVVGCDLNAEATGMEYRVIKAATKNNAKLVLAAMRDIKLKKFANSHLKYRPGNETLLINALTKAVLEEGLENKEFCSANISNLSDLTAALAGVSIADAAAATGVTEADLRAAARLVGGKKGVAVIFGAELMRGGNTDAVKALINLALILGATAGDTGGLFPVYEKTNIRGLLDMGVAPDHFPGHQTDGTTFEKAWGKKLPAAAGKDLWQIIEGIEQGSVKALYLLGCDPVASFPEGERIRKALEKLELLIVQDPFPGEAAKMAHVVFPSSVAAEKNGTFTTIDGRVQPLAKAVAPSGDAREDWDILTELYNRLTGESRIHSPAAVLDEVAALVPAYASVGRTGGTITAQPRSGGLALAPVSARAVAGSPTTLLVGTILYHSGTTTTWSKNNLEIIPKGYIEIHPNDAAKLGIAEGGKVRLSAGSVKVEGTAKITPRVQPGLLFAPSHFRGMNVNALLSRDGGVVPVTVEKA.

The region spanning 1-78 (MVSLTIDGKD…GIKVTTQSEK (78 aa)) is the 2Fe-2S ferredoxin-type domain. Cys-34, Cys-45, Cys-48, and Cys-62 together coordinate [2Fe-2S] cluster. In terms of domain architecture, 4Fe-4S His(Cys)3-ligated-type spans 78-117 (KLSRIRQKIMELMLVNHPLDCPVCDAGGECDLQNACYGLG). [4Fe-4S] cluster contacts are provided by His-94, Cys-98, Cys-101, Cys-107, Cys-146, Cys-149, Cys-152, Cys-186, Cys-189, Cys-192, Cys-196, Cys-222, Cys-225, Cys-229, and Cys-256. 4Fe-4S ferredoxin-type domains are found at residues 137-168 (PLIESDPNRCILCEKCVKVDHEIVGCNAIRVV) and 177-206 (DTVDGNPLNCEFCGNCVAACPTGTLISKPF). The region spanning 215–270 (FTTTPSVCPFCATGCQIEYHSRNGRVERVTSDDSTYNSGNLCINGRFGYSYINSPD) is the 4Fe-4S Mo/W bis-MGD-type domain.

Heterotetramer with 2 beta subunits. The cofactor is [4Fe-4S] cluster.

It localises to the cell inner membrane. Its activity is regulated as follows. Not regulated by FAD or FMN. Its function is as follows. The SfrAB enzymatic complex is probably involved in acetate metabolism and does not participate directly in the reduction of Fe(3+) chelates. May serve as a major route for NADP regeneration. This is NADPH-Fe(3+) oxidoreductase subunit alpha (sfrA) from Geobacter sulfurreducens (strain DL-1 / KN400).